We begin with the raw amino-acid sequence, 368 residues long: DNA-dependent metalloprotease dvc-1 (368 aa).

Residues 21 to 190 enclose the SprT-like domain; it reads HALFIQFDAR…QSCGGNFLKV (170 aa). His89 is a binding site for Zn(2+). Glu90 is a catalytic residue. Positions 93 and 108 each coordinate Zn(2+). The disordered stretch occupies residues 187–309; it reads FLKVKEPEGY…PVNFTSPSSA (123 aa). The segment covering 226–237 has biased composition (basic and acidic residues); sequence TLDDFFKKDGKN. Residues 238 to 274 show a composition bias toward low complexity; the sequence is SSDNSTSKSPTKPSTSLFTGSGQKLGGSSSTSSLLNS. The UBZ4-type zinc finger occupies 344–368; that stretch reads SVICPSCNTEVMENLIHGHLDYCLG. Cys347, Cys350, His362, and Cys366 together coordinate Zn(2+).

It belongs to the Spartan family. Interacts with vcp/p97 (cdc-48.1 or cdc-48.2).

It is found in the nucleus. It localises to the chromosome. Functionally, DNA-dependent metalloendopeptidase that mediates the proteolytic cleavage of covalent DNA-protein cross-links (DPCs) during DNA synthesis, thereby playing a key role in maintaining genomic integrity. DPCs are highly toxic DNA lesions that interfere with essential chromatin transactions, such as replication and transcription, and which are induced by reactive agents, such as UV light or formaldehyde. Associates with the DNA replication machinery and specifically removes DPCs during DNA synthesis. Regulator of UV-induced DNA damage response: required to protect genome stability during DNA replication, possibly via recruitment of vcp/p97 (cdc-48.1 or cdc-48.2) recruitment. The sequence is that of DNA-dependent metalloprotease dvc-1 from Caenorhabditis elegans.